We begin with the raw amino-acid sequence, 456 residues long: 1,3-beta-glucanosyltransferase gas4 (456 aa).

Positions 1–25 (MGVANIIYALFLLGPSIFLKATAQT) are cleaved as a signal peptide. Cysteine 68 and cysteine 97 form a disulfide bridge. Tyrosine 86, asparagine 156, glutamate 157, aspartate 197, and arginine 202 together coordinate (1,3-beta-D-glucosyl)n. Residue glutamate 157 is the Proton donor of the active site. 2 cysteine pairs are disulfide-bonded: cysteine 211-cysteine 350 and cysteine 229-cysteine 260. N-linked (GlcNAc...) asparagine glycosylation occurs at asparagine 248. The active-site Nucleophile is the glutamate 257. Tyrosine 296 serves as a coordination point for (1,3-beta-D-glucosyl)n. Disordered regions lie at residues 334–353 (NPKGDGGYKKAGSPSKCPAN) and 384–434 (IEGP…ESGS). Residues asparagine 353 and asparagine 415 are each glycosylated (N-linked (GlcNAc...) asparagine). The segment covering 417–434 (TSTTSYTSGMTSSSESGS) has biased composition (low complexity). Serine 432 is lipidated: GPI-anchor amidated serine. Positions 433-456 (GSSKIGVAFCQALFITVLIATLSF) are cleaved as a propeptide — removed in mature form.

It belongs to the glycosyl hydrolase 72 family.

It localises to the cell membrane. Its function is as follows. Splits internally a 1,3-beta-glucan molecule and transfers the newly generated reducing end (the donor) to the non-reducing end of another 1,3-beta-glucan molecule (the acceptor) forming a 1,3-beta linkage, resulting in the elongation of 1,3-beta-glucan chains in the cell wall. Involved in spore wall assembly. The protein is 1,3-beta-glucanosyltransferase gas4 (gas4) of Schizosaccharomyces pombe (strain 972 / ATCC 24843) (Fission yeast).